The following is a 401-amino-acid chain: Acetate kinase (401 aa).

Residue Asn9 participates in Mg(2+) binding. ATP is bound at residue Lys16. Arg88 lines the substrate pocket. Asp147 serves as the catalytic Proton donor/acceptor. ATP is bound by residues 207 to 211, 282 to 284, and 333 to 337; these read HLGNG, DCR, and GIGEN. Glu388 contacts Mg(2+).

This sequence belongs to the acetokinase family. As to quaternary structure, homodimer. Mg(2+) serves as cofactor. It depends on Mn(2+) as a cofactor.

It localises to the cytoplasm. The enzyme catalyses acetate + ATP = acetyl phosphate + ADP. It participates in metabolic intermediate biosynthesis; acetyl-CoA biosynthesis; acetyl-CoA from acetate: step 1/2. Catalyzes the formation of acetyl phosphate from acetate and ATP. Can also catalyze the reverse reaction. The protein is Acetate kinase of Haemophilus influenzae (strain ATCC 51907 / DSM 11121 / KW20 / Rd).